A 161-amino-acid polypeptide reads, in one-letter code: Nucleotide-binding protein Tcr_1902 (161 aa).

Belongs to the YajQ family.

Nucleotide-binding protein. The chain is Nucleotide-binding protein Tcr_1902 from Hydrogenovibrio crunogenus (strain DSM 25203 / XCL-2) (Thiomicrospira crunogena).